We begin with the raw amino-acid sequence, 38 residues long: Photosystem II reaction center protein M (38 aa).

The chain crosses the membrane as a helical span at residues 7-27; sequence GFVASILFVLVPSVFLIILYI.

Belongs to the PsbM family. In terms of assembly, PSII is composed of 1 copy each of membrane proteins PsbA, PsbB, PsbC, PsbD, PsbE, PsbF, PsbH, PsbI, PsbJ, PsbK, PsbL, PsbM, PsbT, PsbX, PsbY, PsbZ, Psb30/Ycf12, peripheral proteins PsbO, CyanoQ (PsbQ), PsbU, PsbV and a large number of cofactors. It forms dimeric complexes.

Its subcellular location is the cellular thylakoid membrane. Its function is as follows. One of the components of the core complex of photosystem II (PSII). PSII is a light-driven water:plastoquinone oxidoreductase that uses light energy to abstract electrons from H(2)O, generating O(2) and a proton gradient subsequently used for ATP formation. It consists of a core antenna complex that captures photons, and an electron transfer chain that converts photonic excitation into a charge separation. This subunit is found at the monomer-monomer interface. In Nostoc sp. (strain PCC 7120 / SAG 25.82 / UTEX 2576), this protein is Photosystem II reaction center protein M.